A 160-amino-acid chain; its full sequence is Calcium and integrin-binding family member 3 (160 aa).

EF-hand domains are found at residues 39 to 74, 76 to 111, and 117 to 152; these read KDNP…MSEM, PRDL…LTRG, and EVTL…APDF. Residues Asp89, Asn91, Asp93, Tyr95, Asp100, Asp130, Asp132, Asp134, Arg136, and Asp141 each contribute to the Ca(2+) site.

In terms of assembly, monomer and homodimer. Interacts with ITGA2B (via C-terminus cytoplasmic tail region); the interaction is stabilized/increased in a calcium and magnesium-dependent manner. Interacts with TMC1. Expressed in heart, liver and inner ear. In the inner ear, expressed in vestibule and basilar membrane cells. Expressed in megakaryocytes and endothelial cells.

Functionally, acts as an auxiliary subunit of the sensory mechanoelectrical transduction (MET) channel in hair cells. Plays a role in regulating hair cell MET channel localization and function. This is Calcium and integrin-binding family member 3 (Cib3) from Mus musculus (Mouse).